The primary structure comprises 201 residues: Small ribosomal subunit protein uS4c (201 aa).

Residues 20–44 (GLTNKKPRAGSDLRNQSRSGKKSQY) are disordered. An S4 RNA-binding domain is found at 89–150 (MRLDNILFRL…EQKSKALIQI (62 aa)).

The protein belongs to the universal ribosomal protein uS4 family. In terms of assembly, part of the 30S ribosomal subunit. Contacts protein S5. The interaction surface between S4 and S5 is involved in control of translational fidelity.

It is found in the plastid. The protein resides in the chloroplast. Its function is as follows. One of the primary rRNA binding proteins, it binds directly to 16S rRNA where it nucleates assembly of the body of the 30S subunit. With S5 and S12 plays an important role in translational accuracy. The chain is Small ribosomal subunit protein uS4c (rps4) from Nicotiana tomentosiformis (Tobacco).